Consider the following 453-residue polypeptide: Tyrosine-protein phosphatase non-receptor type 18 (453 aa).

Residues 26-291 (LAREFSDIKA…RFLYHTVAQL (266 aa)) enclose the Tyrosine-protein phosphatase domain. Substrate-binding positions include D197, 229-235 (CSAGCGR), and Q276. C229 acts as the Phosphocysteine intermediate in catalysis. Phosphotyrosine is present on residues Y381 and Y419. The interval 384 to 453 (VAPRAQRPVA…RDPPAEWTRV (70 aa)) is disordered. Residues 442–453 (GPRDPPAEWTRV) show a composition bias toward basic and acidic residues.

This sequence belongs to the protein-tyrosine phosphatase family. Non-receptor class 4 subfamily. As to quaternary structure, interacts with PSTPIP1. In terms of tissue distribution, highest expression in bone marrow. Also expressed in kidney, lung, ovary, spleen, thymus and lymph node.

The protein localises to the nucleus. It localises to the cytoplasm. The catalysed reaction is O-phospho-L-tyrosyl-[protein] + H2O = L-tyrosyl-[protein] + phosphate. In terms of biological role, may be involved in growth and differentiation of hematopoietic cells. The protein is Tyrosine-protein phosphatase non-receptor type 18 (Ptpn18) of Mus musculus (Mouse).